Consider the following 186-residue polypeptide: ATP synthase subunit delta (186 aa).

This sequence belongs to the ATPase delta chain family. As to quaternary structure, F-type ATPases have 2 components, F(1) - the catalytic core - and F(0) - the membrane proton channel. F(1) has five subunits: alpha(3), beta(3), gamma(1), delta(1), epsilon(1). F(0) has three main subunits: a(1), b(2) and c(10-14). The alpha and beta chains form an alternating ring which encloses part of the gamma chain. F(1) is attached to F(0) by a central stalk formed by the gamma and epsilon chains, while a peripheral stalk is formed by the delta and b chains.

It is found in the cell inner membrane. In terms of biological role, f(1)F(0) ATP synthase produces ATP from ADP in the presence of a proton or sodium gradient. F-type ATPases consist of two structural domains, F(1) containing the extramembraneous catalytic core and F(0) containing the membrane proton channel, linked together by a central stalk and a peripheral stalk. During catalysis, ATP synthesis in the catalytic domain of F(1) is coupled via a rotary mechanism of the central stalk subunits to proton translocation. Its function is as follows. This protein is part of the stalk that links CF(0) to CF(1). It either transmits conformational changes from CF(0) to CF(1) or is implicated in proton conduction. The polypeptide is ATP synthase subunit delta (Brucella suis biovar 1 (strain 1330)).